A 476-amino-acid polypeptide reads, in one-letter code: Ribulose bisphosphate carboxylase/oxygenase activase 1, chloroplastic (476 aa).

A chloroplast-targeting transit peptide spans 1 to 56 (MAAAYSTVGAVNRAPLSLNGSGARASLVPSTAFFGSSLKKSAAKFPKASSGNFKIV). Position 165-172 (165-172 (GGKGQGKS)) interacts with ATP.

Belongs to the RuBisCO activase family.

It localises to the plastid. The protein resides in the chloroplast stroma. Activation of RuBisCO (ribulose-1,5-bisphosphate carboxylase/oxygenase; EC 4.1.1.39) involves the ATP-dependent carboxylation of the epsilon-amino group of lysine leading to a carbamate structure. The polypeptide is Ribulose bisphosphate carboxylase/oxygenase activase 1, chloroplastic (RCA1) (Larrea tridentata (Creosote bush)).